We begin with the raw amino-acid sequence, 142 residues long: Relaxin-3 (142 aa).

Residues 1–25 (MARYKLLLLLAVWVLTGELWPGAEA) form the signal peptide. 3 cysteine pairs are disulfide-bonded: C35–C129, C47–C142, and C128–C133. Residues 55 to 118 (SDILAHEAMG…GTPGALRGSR (64 aa)) constitute a propeptide, connecting peptide.

Belongs to the insulin family. As to quaternary structure, heterodimer of a B chain and an A chain linked by two disulfide bonds.

Its subcellular location is the secreted. In terms of biological role, may play a role in neuropeptide signaling processes. Ligand for LGR7, RXFP3 and RXFP4. The sequence is that of Relaxin-3 (RLN3) from Pan troglodytes (Chimpanzee).